A 549-amino-acid polypeptide reads, in one-letter code: Arginine--tRNA ligase (549 aa).

Positions 113–123 (ANPDGPLHIGH) match the 'HIGH' region motif.

Belongs to the class-I aminoacyl-tRNA synthetase family.

It is found in the cytoplasm. It catalyses the reaction tRNA(Arg) + L-arginine + ATP = L-arginyl-tRNA(Arg) + AMP + diphosphate. This chain is Arginine--tRNA ligase (argS), found in Archaeoglobus fulgidus (strain ATCC 49558 / DSM 4304 / JCM 9628 / NBRC 100126 / VC-16).